The chain runs to 334 residues: L-lactate dehydrogenase B chain (334 aa).

Alanine 2 is modified (N-acetylalanine). Lysine 7 carries the post-translational modification N6-acetyllysine. NAD(+)-binding positions include 30–58 (GQVGMACAISILGKSLADELALVDVLEDK) and arginine 100. Serine 44 carries the phosphoserine modification. Lysine 58 is subject to N6-acetyllysine. A substrate-binding site is contributed by arginine 107. Residue lysine 119 is modified to N6-acetyllysine. NAD(+) is bound at residue asparagine 139. Substrate is bound by residues asparagine 139 and arginine 170. Histidine 194 functions as the Proton acceptor in the catalytic mechanism. A Phosphotyrosine modification is found at tyrosine 240. Threonine 249 is a substrate binding site. Lysine 329 is modified (N6-acetyllysine).

The protein belongs to the LDH/MDH superfamily. LDH family. In terms of assembly, homotetramer. Interacts with PTEN upstream reading frame protein MP31; the interaction leads to inhibition of mitochondrial lactate dehydrogenase activity, preventing conversion of lactate to pyruvate in mitochondria.

The protein resides in the cytoplasm. The protein localises to the mitochondrion inner membrane. The enzyme catalyses (S)-lactate + NAD(+) = pyruvate + NADH + H(+). Its pathway is fermentation; pyruvate fermentation to lactate; (S)-lactate from pyruvate: step 1/1. Interconverts simultaneously and stereospecifically pyruvate and lactate with concomitant interconversion of NADH and NAD(+). In Rattus norvegicus (Rat), this protein is L-lactate dehydrogenase B chain (Ldhb).